The chain runs to 345 residues: Tryptophan--tRNA ligase (345 aa).

ATP-binding positions include 21-23 and 30-31; these read QPT and GN. Positions 22–31 match the 'HIGH' region motif; it reads PTADSYHLGN. Aspartate 147 contacts L-tryptophan. Residues 159–161, isoleucine 198, and 207–211 contribute to the ATP site; these read GED and KMSKS. Positions 207-211 match the 'KMSKS' region motif; that stretch reads KMSKS.

Belongs to the class-I aminoacyl-tRNA synthetase family. Homodimer.

The protein localises to the cytoplasm. The catalysed reaction is tRNA(Trp) + L-tryptophan + ATP = L-tryptophyl-tRNA(Trp) + AMP + diphosphate + H(+). Its function is as follows. Catalyzes the attachment of tryptophan to tRNA(Trp). The polypeptide is Tryptophan--tRNA ligase (Corynebacterium glutamicum (strain ATCC 13032 / DSM 20300 / JCM 1318 / BCRC 11384 / CCUG 27702 / LMG 3730 / NBRC 12168 / NCIMB 10025 / NRRL B-2784 / 534)).